The primary structure comprises 830 residues: P-selectin (830 aa).

A signal peptide spans 1–41 (MANCQIAILYQRFQRVVFGISQLLCFSALISELTNQKEVAA). Residues 42 to 771 (WTYHYSTKAY…QAGPLTIQEA (730 aa)) are Extracellular-facing. N-linked (GlcNAc...) asparagine glycans are attached at residues Asn54 and Asn98. Residues 58-158 (KYCQNRYTDL…HCLKKKHALC (101 aa)) form the C-type lectin domain. 23 cysteine pairs are disulfide-bonded: Cys60/Cys158, Cys131/Cys150, Cys163/Cys174, Cys168/Cys183, Cys185/Cys194, Cys200/Cys244, Cys230/Cys257, Cys262/Cys306, Cys292/Cys319, Cys324/Cys368, Cys354/Cys381, Cys386/Cys430, Cys416/Cys443, Cys448/Cys492, Cys478/Cys505, Cys510/Cys554, Cys540/Cys567, Cys572/Cys616, Cys602/Cys629, Cys642/Cys686, Cys672/Cys699, Cys704/Cys748, and Cys734/Cys761. Ca(2+) contacts are provided by Glu121, Asn123, and Asn124. Position 123 (Asn123) interacts with a carbohydrate. A carbohydrate-binding residues include Glu133 and Asn146. Positions 146 and 147 each coordinate Ca(2+). The region spanning 159–195 (YTASCQDMSCSKQGECLETIGNYTCSCYPGFYGPECE) is the EGF-like domain. Asn180 carries N-linked (GlcNAc...) asparagine glycosylation. 9 Sushi domains span residues 198–259 (RECG…QCLA), 260–321 (AQCP…VCKA), 322–383 (VQCQ…TCEA), 384–445 (ISCE…VCQA), 446–507 (LQCQ…ECQA), 508–569 (IPCT…MCEA), 570–631 (IKCP…TCKG), 640–701 (VQCP…ACRA), and 702–763 (VKCS…TCQA). 2 N-linked (GlcNAc...) asparagine glycosylation sites follow: Asn212 and Asn219. An N-linked (GlcNAc...) asparagine glycan is attached at Asn411. Asn460 carries N-linked (GlcNAc...) asparagine glycosylation. A glycan (N-linked (GlcNAc...) asparagine) is linked at Asn518. Asn665 carries an N-linked (GlcNAc...) asparagine glycan. Residues Asn716, Asn723, and Asn741 are each glycosylated (N-linked (GlcNAc...) asparagine). The helical transmembrane segment at 772-795 (LTYFGGAVASTIGLIMGGTLLALL) threads the bilayer. Residues 796 to 830 (RKRFRQKDDGKCPLNPHSHLGTYGVFTNAAFDPSP) are Cytoplasmic-facing. Cys807 carries the S-palmitoyl cysteine; alternate lipid modification. Cys807 carries S-stearoyl cysteine; alternate lipidation. The Endocytosis signal motif lies at 818 to 821 (YGVF). The interaction with SNX17 stretch occupies residues 821-830 (FTNAAFDPSP).

This sequence belongs to the selectin/LECAM family. Interacts with SNX17. Interacts with SELPLG/PSGL1 and PODXL2 and mediates neutrophil adhesion and leukocyte rolling. This interaction requires the sialyl-Lewis X epitope of SELPLG and PODXL2, and specific tyrosine sulfation on SELPLG. Interacts (via C-type lectin domain) with alpha-IIb/beta3 integrin ITGA2B:ITGB3 and alpha-V/beta-3 integrin ITGAV:ITGB3. Interacts with alpha5/beta1 integrin ITGA5:ITGB1 and alpha4/beta1 integrin ITGA4:ITGB. As to expression, stored in the alpha-granules of platelets and Weibel-Palade bodies of endothelial cells. Upon cell activation by agonists, P-selectin is transported rapidly to the cell surface.

It is found in the cell membrane. Its function is as follows. Ca(2+)-dependent receptor for myeloid cells that binds to carbohydrates on neutrophils and monocytes. Mediates the interaction of activated endothelial cells or platelets with leukocytes. The ligand recognized is sialyl-Lewis X. Mediates rapid rolling of leukocyte rolling over vascular surfaces during the initial steps in inflammation through interaction with SELPLG. Mediates cell-cell interactions and cell adhesion via the interaction with integrin alpha-IIb/beta3 (ITGA2B:ITGB3) and integrin alpha-V/beta-3 (ITGAV:ITGB3). The polypeptide is P-selectin (SELP) (Homo sapiens (Human)).